A 58-amino-acid chain; its full sequence is Large ribosomal subunit protein uL30 (58 aa).

The protein belongs to the universal ribosomal protein uL30 family. As to quaternary structure, part of the 50S ribosomal subunit.

The protein is Large ribosomal subunit protein uL30 of Erythrobacter litoralis (strain HTCC2594).